We begin with the raw amino-acid sequence, 502 residues long: ATP synthase subunit beta (502 aa).

Position 156 to 163 (G156 to T163) interacts with ATP.

It belongs to the ATPase alpha/beta chains family. As to quaternary structure, F-type ATPases have 2 components, CF(1) - the catalytic core - and CF(0) - the membrane proton channel. CF(1) has five subunits: alpha(3), beta(3), gamma(1), delta(1), epsilon(1). CF(0) has three main subunits: a(1), b(2) and c(9-12). The alpha and beta chains form an alternating ring which encloses part of the gamma chain. CF(1) is attached to CF(0) by a central stalk formed by the gamma and epsilon chains, while a peripheral stalk is formed by the delta and b chains.

The protein resides in the cell membrane. It catalyses the reaction ATP + H2O + 4 H(+)(in) = ADP + phosphate + 5 H(+)(out). Functionally, produces ATP from ADP in the presence of a proton gradient across the membrane. The catalytic sites are hosted primarily by the beta subunits. This chain is ATP synthase subunit beta, found in Cellulophaga lytica (Cytophaga lytica).